Here is a 575-residue protein sequence, read N- to C-terminus: Sodium/hydrogen exchanger 8 (575 aa).

Helical transmembrane passes span methionine 54–isoleucine 74, leucine 78–isoleucine 98, proline 117–histidine 137, leucine 150–leucine 170, phenylalanine 185–alanine 205, leucine 255–isoleucine 275, glycine 305–methionine 325, valine 348–proline 368, isoleucine 373–proline 393, methionine 411–leucine 431, and threonine 445–isoleucine 465. At threonine 504 the chain carries Phosphothreonine. Serine 565 and serine 567 each carry phosphoserine.

Belongs to the monovalent cation:proton antiporter 1 (CPA1) transporter (TC 2.A.36) family. In terms of tissue distribution, intestine and kidneys.

The protein localises to the golgi apparatus membrane. It is found in the golgi apparatus. Its subcellular location is the trans-Golgi network membrane. The protein resides in the endosome. It localises to the multivesicular body membrane. The protein localises to the apical cell membrane. It is found in the cytoplasmic vesicle. Its subcellular location is the secretory vesicle. The protein resides in the acrosome. The enzyme catalyses Na(+)(in) + H(+)(out) = Na(+)(out) + H(+)(in). With respect to regulation, expression and activity are regulated by acid media by increasing the rate of trafficking to the apical membrane. Inhibited by HOE694 and S3226. Functionally, na(+)/H(+) antiporter. Mediates the electoneutral exchange of intracellular H(+) ions for extracellular Na(+) in 1:1 stoichiometry. Acts as an Na(+)/H(+) exchanger in the trans-Golgi. Contributes to the regulation of pH regulation of Golgi apparatus, and consequently, in protein trafficking and endosomal morphology. In germ cells, plays a crucial role in acrosome biogenesis and sperm development, probably by playing a role in the fusion of the Golgi-derived vesicles that form the acrosomal cap. Can also be active at the cell surface of specialized cells. In the small intestine, at the cell membrane, plays a major physiological role in transepithelial absorption of Na(+) and regulates intracellular pH homeostasis of intestinal epithelial cells. Acts as an important regulator of mucosal integrity in the intestine and in the stomach, could mediate the pH fluctuation necessary for mucin exocytosis or assist membrane trafficking of other proteins. Plays a role in photoreceptor survival and in the maintenance of intracellular pH homeostasis in retinal pigment epithelium (RPE cells). This Rattus norvegicus (Rat) protein is Sodium/hydrogen exchanger 8 (Slc9a8).